Reading from the N-terminus, the 508-residue chain is UTP--glucose-1-phosphate uridylyltransferase (508 aa).

At Ser13 the chain carries Phosphoserine. UTP is bound by residues 113–116 (LNGG), Lys127, Gln190, and Gly222. 115–116 (GG) contacts substrate. Lys127 lines the Mg(2+) pocket. Substrate is bound by residues His223 and 251-253 (NID). UTP contacts are provided by Asp253 and Lys396. Asp253 contacts Mg(2+). Lys396 is a catalytic residue. Thr426 bears the Phosphothreonine mark. Residue Ser434 is modified to Phosphoserine. Lys438 carries the post-translational modification N6-acetyllysine. Residues Ser448 and Ser461 each carry the phosphoserine modification. Positions 457–508 (HLTVSGDVTFGKNVSLKGTVIIIXNHGDRIDIPPGAVLENKIVSGNLRILDH) are oligomerization. Positions 502–503 (NL) are critical for end-to-end subunit interaction.

It belongs to the UDPGP type 1 family. As to quaternary structure, homooctamer.

Its subcellular location is the cytoplasm. The catalysed reaction is alpha-D-glucose 1-phosphate + UTP + H(+) = UDP-alpha-D-glucose + diphosphate. It participates in glycan biosynthesis; glycogen biosynthesis. Functionally, UTP--glucose-1-phosphate uridylyltransferase catalyzing the conversion of glucose-1-phosphate into UDP-glucose, a crucial precursor for the production of glycogen. The protein is UTP--glucose-1-phosphate uridylyltransferase (UGP2) of Sus scrofa (Pig).